A 499-amino-acid polypeptide reads, in one-letter code: Bifunctional purine biosynthesis protein PurH (499 aa).

One can recognise an MGS-like domain in the interval methionine 1–threonine 144.

This sequence belongs to the PurH family.

The enzyme catalyses (6R)-10-formyltetrahydrofolate + 5-amino-1-(5-phospho-beta-D-ribosyl)imidazole-4-carboxamide = 5-formamido-1-(5-phospho-D-ribosyl)imidazole-4-carboxamide + (6S)-5,6,7,8-tetrahydrofolate. It carries out the reaction IMP + H2O = 5-formamido-1-(5-phospho-D-ribosyl)imidazole-4-carboxamide. It functions in the pathway purine metabolism; IMP biosynthesis via de novo pathway; 5-formamido-1-(5-phospho-D-ribosyl)imidazole-4-carboxamide from 5-amino-1-(5-phospho-D-ribosyl)imidazole-4-carboxamide (10-formyl THF route): step 1/1. Its pathway is purine metabolism; IMP biosynthesis via de novo pathway; IMP from 5-formamido-1-(5-phospho-D-ribosyl)imidazole-4-carboxamide: step 1/1. The sequence is that of Bifunctional purine biosynthesis protein PurH from Clostridium botulinum (strain Hall / ATCC 3502 / NCTC 13319 / Type A).